Here is a 226-residue protein sequence, read N- to C-terminus: Late protein I226R (226 aa).

The N-terminal stretch at 1-16 (MKMETFLVCLFHNADG) is a signal peptide. 2 N-linked (GlcNAc...) asparagine; by host glycosylation sites follow: N142 and N164.

This sequence belongs to the asfivirus I226R family.

Its function is as follows. Plays a role in the inhibition of host NF-kappa-B and IRF3 signaling pathways. Mechanistically, promotes the degradation of host IKBKG through enhancing its ubiquitination leading to inhibition of both pathways. The protein is Late protein I226R of African swine fever virus (isolate Tick/South Africa/Pretoriuskop Pr4/1996) (ASFV).